Consider the following 259-residue polypeptide: 3-deoxy-manno-octulosonate cytidylyltransferase (259 aa).

Belongs to the KdsB family.

The protein resides in the cytoplasm. The catalysed reaction is 3-deoxy-alpha-D-manno-oct-2-ulosonate + CTP = CMP-3-deoxy-beta-D-manno-octulosonate + diphosphate. The protein operates within nucleotide-sugar biosynthesis; CMP-3-deoxy-D-manno-octulosonate biosynthesis; CMP-3-deoxy-D-manno-octulosonate from 3-deoxy-D-manno-octulosonate and CTP: step 1/1. Its pathway is bacterial outer membrane biogenesis; lipopolysaccharide biosynthesis. Functionally, activates KDO (a required 8-carbon sugar) for incorporation into bacterial lipopolysaccharide in Gram-negative bacteria. This Actinobacillus succinogenes (strain ATCC 55618 / DSM 22257 / CCUG 43843 / 130Z) protein is 3-deoxy-manno-octulosonate cytidylyltransferase.